The sequence spans 207 residues: Holliday junction branch migration complex subunit RuvA (207 aa).

The interval 1–64 (MIGRLRGNLL…EDAQLLYGFN (64 aa)) is domain I. A domain II region spans residues 65 to 143 (TKNERALFRE…GWGAGDLFTP (79 aa)). Residues 144 to 158 (ATDAAPMDDGSEFIT) are flexible linker. Residues 159-207 (SPQSAVDEAVSALIALGYKPQQASKTVSQVAKPDMTSEVLIRESLKSMI) are domain III.

The protein belongs to the RuvA family. Homotetramer. Forms an RuvA(8)-RuvB(12)-Holliday junction (HJ) complex. HJ DNA is sandwiched between 2 RuvA tetramers; dsDNA enters through RuvA and exits via RuvB. An RuvB hexamer assembles on each DNA strand where it exits the tetramer. Each RuvB hexamer is contacted by two RuvA subunits (via domain III) on 2 adjacent RuvB subunits; this complex drives branch migration. In the full resolvosome a probable DNA-RuvA(4)-RuvB(12)-RuvC(2) complex forms which resolves the HJ.

It is found in the cytoplasm. In terms of biological role, the RuvA-RuvB-RuvC complex processes Holliday junction (HJ) DNA during genetic recombination and DNA repair, while the RuvA-RuvB complex plays an important role in the rescue of blocked DNA replication forks via replication fork reversal (RFR). RuvA specifically binds to HJ cruciform DNA, conferring on it an open structure. The RuvB hexamer acts as an ATP-dependent pump, pulling dsDNA into and through the RuvAB complex. HJ branch migration allows RuvC to scan DNA until it finds its consensus sequence, where it cleaves and resolves the cruciform DNA. In Aliivibrio fischeri (strain MJ11) (Vibrio fischeri), this protein is Holliday junction branch migration complex subunit RuvA.